We begin with the raw amino-acid sequence, 324 residues long: UDP-N-acetylenolpyruvoylglucosamine reductase (324 aa).

The 194-residue stretch at 38-231 (AGGSARRLYV…SRERIRSLLK (194 aa)) folds into the FAD-binding PCMH-type domain. Residue Arg-195 is part of the active site. The active-site Proton donor is the Ser-246. The active site involves Glu-316.

The protein belongs to the MurB family. Requires FAD as cofactor.

The protein resides in the cytoplasm. The catalysed reaction is UDP-N-acetyl-alpha-D-muramate + NADP(+) = UDP-N-acetyl-3-O-(1-carboxyvinyl)-alpha-D-glucosamine + NADPH + H(+). Its pathway is cell wall biogenesis; peptidoglycan biosynthesis. Its function is as follows. Cell wall formation. This Thiobacillus denitrificans (strain ATCC 25259 / T1) protein is UDP-N-acetylenolpyruvoylglucosamine reductase.